The sequence spans 380 residues: Glucose-1-phosphate adenylyltransferase (380 aa).

Alpha-D-glucose 1-phosphate is bound by residues G164, 179–180, and S190; that span reads EK.

The protein belongs to the bacterial/plant glucose-1-phosphate adenylyltransferase family. Homotetramer.

It catalyses the reaction alpha-D-glucose 1-phosphate + ATP + H(+) = ADP-alpha-D-glucose + diphosphate. Its pathway is glycan biosynthesis; glycogen biosynthesis. Its function is as follows. Involved in the biosynthesis of ADP-glucose, a building block required for the elongation reactions to produce glycogen. Catalyzes the reaction between ATP and alpha-D-glucose 1-phosphate (G1P) to produce pyrophosphate and ADP-Glc. The polypeptide is Glucose-1-phosphate adenylyltransferase (Streptococcus pneumoniae (strain CGSP14)).